The sequence spans 62 residues: Sucrase-isomaltase, intestinal (62 aa).

At 2–12 (ARKKFSGLEIX) the chain is on the cytoplasmic side. Ser-7 carries the phosphoserine; by PKA modification. Residues 13–32 (LIVLFAIVLSIAIALVVVXA) form a helical; Signal-anchor for type II membrane protein membrane-spanning segment. The Lumenal portion of the chain corresponds to 33 to 38 (SKXPAV). Tyr-59 bears the Sulfotyrosine mark.

This sequence belongs to the glycosyl hydrolase 31 family. The resulting sucrase and isomaltase subunits stay associated with one another in a complex by non-covalent linkages. In terms of processing, the precursor is proteolytically cleaved when exposed to pancreatic proteases in the intestinal lumen. Sulfated.

The protein resides in the apical cell membrane. It carries out the reaction Hydrolysis of sucrose and maltose by an alpha-D-glucosidase-type action.. The catalysed reaction is Hydrolysis of (1-&gt;6)-alpha-D-glucosidic linkages in some oligosaccharides produced from starch and glycogen by alpha-amylase, and in isomaltose.. Plays an important role in the final stage of carbohydrate digestion. Isomaltase activity is specific for both alpha-1,4- and alpha-1,6-oligosaccharides. In Sus scrofa (Pig), this protein is Sucrase-isomaltase, intestinal (SI).